Reading from the N-terminus, the 526-residue chain is Peptide chain release factor 3 (526 aa).

The tr-type G domain maps to 9–277 (NKRRTFAIIS…DFVEYAPGPQ (269 aa)). Residues 18-25 (SHPDAGKT), 86-90 (DTPGH), and 140-143 (NKLD) contribute to the GTP site.

The protein belongs to the TRAFAC class translation factor GTPase superfamily. Classic translation factor GTPase family. PrfC subfamily.

It localises to the cytoplasm. In terms of biological role, increases the formation of ribosomal termination complexes and stimulates activities of RF-1 and RF-2. It binds guanine nucleotides and has strong preference for UGA stop codons. It may interact directly with the ribosome. The stimulation of RF-1 and RF-2 is significantly reduced by GTP and GDP, but not by GMP. This Legionella pneumophila (strain Paris) protein is Peptide chain release factor 3.